Here is a 490-residue protein sequence, read N- to C-terminus: Xylulose kinase (490 aa).

Substrate is bound by residues His99, Arg170, Asp280, and Asn281. Residues Trp355, Gly441 to Ala442, and Asn445 each bind ATP.

The protein belongs to the FGGY kinase family. In terms of assembly, monomer.

The enzyme catalyses D-xylulose + ATP = D-xylulose 5-phosphate + ADP + H(+). Functionally, phosphorylates D-xylulose to produce D-xylulose 5-phosphate, a molecule that may play an important role in the regulation of glucose metabolism and lipogenesis. This chain is Xylulose kinase (XYLB), found in Bos taurus (Bovine).